Here is a 285-residue protein sequence, read N- to C-terminus: Shikimate dehydrogenase (NADP(+)) (285 aa).

Residues 20–22 (SRS) and T67 contribute to the shikimate site. K71 serves as the catalytic Proton acceptor. Shikimate is bound by residues N93 and D108. NADP(+) contacts are provided by residues 132–136 (GAGGA) and M224. Y226 is a binding site for shikimate. G248 is a binding site for NADP(+).

This sequence belongs to the shikimate dehydrogenase family. In terms of assembly, homodimer.

The enzyme catalyses shikimate + NADP(+) = 3-dehydroshikimate + NADPH + H(+). It functions in the pathway metabolic intermediate biosynthesis; chorismate biosynthesis; chorismate from D-erythrose 4-phosphate and phosphoenolpyruvate: step 4/7. In terms of biological role, involved in the biosynthesis of the chorismate, which leads to the biosynthesis of aromatic amino acids. Catalyzes the reversible NADPH linked reduction of 3-dehydroshikimate (DHSA) to yield shikimate (SA). The sequence is that of Shikimate dehydrogenase (NADP(+)) from Bordetella avium (strain 197N).